We begin with the raw amino-acid sequence, 435 residues long: GTPase Obg (435 aa).

One can recognise an Obg domain in the interval A6–L164. The 171-residue stretch at A165 to R335 folds into the OBG-type G domain. GTP is bound by residues G171 to S178, F196 to I200, D217 to G220, N287 to D290, and S316 to V318. The Mg(2+) site is built by S178 and T198. The OCT domain occupies R357–E435.

Belongs to the TRAFAC class OBG-HflX-like GTPase superfamily. OBG GTPase family. Monomer. The cofactor is Mg(2+).

The protein resides in the cytoplasm. Its function is as follows. An essential GTPase which binds GTP, GDP and possibly (p)ppGpp with moderate affinity, with high nucleotide exchange rates and a fairly low GTP hydrolysis rate. Plays a role in control of the cell cycle, stress response, ribosome biogenesis and in those bacteria that undergo differentiation, in morphogenesis control. In Thermotoga petrophila (strain ATCC BAA-488 / DSM 13995 / JCM 10881 / RKU-1), this protein is GTPase Obg.